The chain runs to 484 residues: Glutamyl-tRNA(Gln) amidotransferase subunit A (484 aa).

Residues K74 and S149 each act as charge relay system in the active site. S173 acts as the Acyl-ester intermediate in catalysis.

It belongs to the amidase family. GatA subfamily. In terms of assembly, heterotrimer of A, B and C subunits.

It carries out the reaction L-glutamyl-tRNA(Gln) + L-glutamine + ATP + H2O = L-glutaminyl-tRNA(Gln) + L-glutamate + ADP + phosphate + H(+). Its function is as follows. Allows the formation of correctly charged Gln-tRNA(Gln) through the transamidation of misacylated Glu-tRNA(Gln) in organisms which lack glutaminyl-tRNA synthetase. The reaction takes place in the presence of glutamine and ATP through an activated gamma-phospho-Glu-tRNA(Gln). This Prochlorococcus marinus subsp. pastoris (strain CCMP1986 / NIES-2087 / MED4) protein is Glutamyl-tRNA(Gln) amidotransferase subunit A.